Consider the following 270-residue polypeptide: Urease accessory protein UreD (270 aa).

This sequence belongs to the UreD family. As to quaternary structure, ureD, UreF and UreG form a complex that acts as a GTP-hydrolysis-dependent molecular chaperone, activating the urease apoprotein by helping to assemble the nickel containing metallocenter of UreC. The UreE protein probably delivers the nickel.

The protein resides in the cytoplasm. Required for maturation of urease via the functional incorporation of the urease nickel metallocenter. The sequence is that of Urease accessory protein UreD from Synechocystis sp. (strain ATCC 27184 / PCC 6803 / Kazusa).